A 462-amino-acid chain; its full sequence is ESX-1 secretion system protein EccE1 (462 aa).

The next 2 helical transmembrane spans lie at 9 to 29 and 34 to 54; these read FSTG…IAFL and WWAG…TFYG.

It belongs to the EccE family. In terms of assembly, part of the ESX-1 / type VII secretion system (T7SS), which is composed of cytosolic and membrane components. The ESX-1 membrane complex is composed of EccB1, EccCa1, EccCb1, EccD1 and EccE1.

The protein localises to the cell inner membrane. Part of the ESX-1 specialized secretion system, which delivers several virulence factors to host cells during infection, including the key virulence factors EsxA (ESAT-6) and EsxB (CFP-10). This chain is ESX-1 secretion system protein EccE1, found in Mycobacterium tuberculosis (strain CDC 1551 / Oshkosh).